A 193-amino-acid chain; its full sequence is Anthranilate synthase component 2 (193 aa).

Positions 3–193 (DILLLDNVDS…EQTLAWALAK (191 aa)) constitute a Glutamine amidotransferase type-1 domain. 57–59 (GPG) lines the L-glutamine pocket. The active-site Nucleophile; for GATase activity is the Cys-84. L-glutamine-binding positions include Gln-88 and 134–135 (SL). Active-site for GATase activity residues include His-170 and Glu-172.

In terms of assembly, heterotetramer consisting of two non-identical subunits: a beta subunit (TrpG) and a large alpha subunit (TrpE).

The enzyme catalyses chorismate + L-glutamine = anthranilate + pyruvate + L-glutamate + H(+). The protein operates within amino-acid biosynthesis; L-tryptophan biosynthesis; L-tryptophan from chorismate: step 1/5. Its function is as follows. Part of a heterotetrameric complex that catalyzes the two-step biosynthesis of anthranilate, an intermediate in the biosynthesis of L-tryptophan. In the first step, the glutamine-binding beta subunit (TrpG) of anthranilate synthase (AS) provides the glutamine amidotransferase activity which generates ammonia as a substrate that, along with chorismate, is used in the second step, catalyzed by the large alpha subunit of AS (TrpE) to produce anthranilate. In the absence of TrpG, TrpE can synthesize anthranilate directly from chorismate and high concentrations of ammonia. This is Anthranilate synthase component 2 (trpG) from Serratia marcescens.